Consider the following 338-residue polypeptide: uncharacterized protein (338 aa).

The N-terminal stretch at 1–29 is a signal peptide; it reads MIKQLYKNITICSLAISTALTVFPATSYA.

The protein belongs to the aerolysin family.

This is an uncharacterized protein from Staphylococcus aureus (strain Mu50 / ATCC 700699).